Consider the following 509-residue polypeptide: Subtelomeric hrmA-associated cluster protein AFUA_5G14880 (509 aa).

In terms of biological role, part of the subtelomeric hrmA-associated cluster (HAC) containing genes that alter the hyphal surface (such as reduced total chitin or increased beta-glucan exposure) and perturb inter-hyphal interactions within the developing biofilms, resulting in a loss of vertically aligned polarized growing filaments. Consequently, this hypoxia-typic morphotype (called H-MORPH) with altered biofilm architecture leads to increased hypoxia fitness, increased host inflammation, rapid disease progression, and mortality in a murine model of invasive aspergillosis. The polypeptide is Subtelomeric hrmA-associated cluster protein AFUA_5G14880 (Aspergillus fumigatus (strain ATCC MYA-4609 / CBS 101355 / FGSC A1100 / Af293) (Neosartorya fumigata)).